The primary structure comprises 200 residues: Phospholipase D (200 aa).

The first 25 residues, 1 to 25, serve as a signal peptide directing secretion; sequence MKRKNNKFIEISIAFILGVALGIYG. The PLD phosphodiesterase domain occupies 142–169; the sequence is VPGIAHNKVIIIDRKKVITGSFNFTAAA. Residues H147, K149, and D154 contribute to the active site.

This sequence belongs to the phospholipase D family. Homodimer.

Its subcellular location is the secreted. It catalyses the reaction a 1,2-diacyl-sn-glycero-3-phosphocholine + H2O = a 1,2-diacyl-sn-glycero-3-phosphate + choline + H(+). Functionally, could be a virulence factor. The chain is Phospholipase D (pld) from Rickettsia felis (strain ATCC VR-1525 / URRWXCal2) (Rickettsia azadi).